The primary structure comprises 902 residues: MGIATFAVVDLETTGNQLDYDEIIQIGITFVRQNQVIDTYHSMIRTDLEIPPFIQALTSIEEEMLVQAPYFNEVADDIYQLIKDCVFVAHNISFDLNFIKKAFEKCNIQFKPKRVMDTLELFKIAFPTDKSYQLSALAESHHIPLNNAHRADEDATTTAKLMIKAFEKFEQLHLDTQKQLYYLSKNLKYDLYHILFEMVRNYQTKPPNNQFEQFEQIIYRKQIDLKKPAVNFDGTLKDLYKNVTQSLNLTYRPQQLYLAEIILDQLMHSDKAMIEAPLGSGKSLAYLLAATMYNIETGRHVMISTNTKLLQSQLLEKDIPLLNDVLDFKINASLIKSKNDYISLGLISQILKDDTNNYEVSILKMQLLIWITETNTGDIQELNLKGGQKMYVDQKIETYVPVRHDIHYYNYIKRNAQNIQIGITNHAHLIHSDSENTIYQLFDDCIIDEAHRLPDYALNQVTNDLNYSDVKYQLGLIGKNENEKLLKAVDKLEQQRILEKLDIAPIDVFGLKININELHDLNEQLFTTIYNIIQTSDVYDDDIHKYHYVYDFETGEILKDLRAIIDKLNKTIEIFNGMNHKTIKSVRKQLLYLHDKFKLIEQSIKDHHTSFISIKNLAQKSTIRLLVKDYDVKDILTKQVLEKFKSLTFISGTLTFNHSFKAFQNWFNEDIDFNTFEISTPLTSSNHTNVFVPNDVETYNYKNLDDYVASIVDYIVEYITVTQSKCLVLFTSYKMMHMVQDLLNELPELEDYVILTQQQNQNYKIVQQFNNFDKSILLGTSTFFEGFDFQANGLKCVMIAKLPFMNKHNIKYWLMDSEFTSTFKDYVLPDAVTRFRQGLGRLIRHEDDKGLIVSFDDRLVNSTYKSFFAQSLEHFKQRKGNIKQFNKLLNQIQRSIDNESKS.

The Exonuclease domain occupies 8–161; that stretch reads VVDLETTGNQ…DEDATTTAKL (154 aa). The Helicase ATP-binding domain occupies 241 to 496; the sequence is KNVTQSLNLT…KAVDKLEQQR (256 aa). ATP is bound at residue 276 to 283; it reads APLGSGKS. Residues 448–451 carry the DEAH box motif; sequence DEAH. The 170-residue stretch at 714 to 883 folds into the Helicase C-terminal domain; sequence YIVEYITVTQ…HFKQRKGNIK (170 aa).

This sequence belongs to the helicase family. DinG subfamily. Type 2 sub-subfamily.

In terms of biological role, 3'-5' exonuclease. The polypeptide is 3'-5' exonuclease DinG (Staphylococcus epidermidis (strain ATCC 35984 / DSM 28319 / BCRC 17069 / CCUG 31568 / BM 3577 / RP62A)).